A 330-amino-acid chain; its full sequence is 4-hydroxythreonine-4-phosphate dehydrogenase (330 aa).

2 residues coordinate substrate: H134 and T135. Residues H164, H209, and H264 each contribute to the a divalent metal cation site. 3 residues coordinate substrate: K272, N281, and R290.

It belongs to the PdxA family. As to quaternary structure, homodimer. Zn(2+) is required as a cofactor. The cofactor is Mg(2+). Requires Co(2+) as cofactor.

Its subcellular location is the cytoplasm. It carries out the reaction 4-(phosphooxy)-L-threonine + NAD(+) = 3-amino-2-oxopropyl phosphate + CO2 + NADH. The protein operates within cofactor biosynthesis; pyridoxine 5'-phosphate biosynthesis; pyridoxine 5'-phosphate from D-erythrose 4-phosphate: step 4/5. Catalyzes the NAD(P)-dependent oxidation of 4-(phosphooxy)-L-threonine (HTP) into 2-amino-3-oxo-4-(phosphooxy)butyric acid which spontaneously decarboxylates to form 3-amino-2-oxopropyl phosphate (AHAP). This chain is 4-hydroxythreonine-4-phosphate dehydrogenase, found in Pseudoalteromonas translucida (strain TAC 125).